Here is a 577-residue protein sequence, read N- to C-terminus: DEAD-box ATP-dependent RNA helicase 22 (577 aa).

The short motif at 82-110 (TSWESLGVSDRLASALHGAGLARPSLVQA) is the Q motif element. In terms of domain architecture, Helicase ATP-binding spans 113–375 (IPHVLTTNDV…GGVLKRMFPN (263 aa)). 126 to 133 (AETGSGKT) serves as a coordination point for ATP. The short motif at 249-252 (DEAD) is the DEAD box element. The interval 288 to 317 (SLGDTNEYREDSDSQSAELSADDEENEDGL) is disordered. A Helicase C-terminal domain is found at 407–568 (LLDAVKYGLK…SFRNKLKKQA (162 aa)).

Belongs to the DEAD box helicase family.

The catalysed reaction is ATP + H2O = ADP + phosphate + H(+). In Oryza sativa subsp. japonica (Rice), this protein is DEAD-box ATP-dependent RNA helicase 22.